Here is a 134-residue protein sequence, read N- to C-terminus: ATP synthase epsilon chain (134 aa).

The protein belongs to the ATPase epsilon chain family. As to quaternary structure, F-type ATPases have 2 components, CF(1) - the catalytic core - and CF(0) - the membrane proton channel. CF(1) has five subunits: alpha(3), beta(3), gamma(1), delta(1), epsilon(1). CF(0) has three main subunits: a, b and c.

The protein localises to the cell membrane. Functionally, produces ATP from ADP in the presence of a proton gradient across the membrane. The protein is ATP synthase epsilon chain of Listeria monocytogenes serotype 4a (strain HCC23).